A 52-amino-acid polypeptide reads, in one-letter code: Large ribosomal subunit protein bL33 (52 aa).

Belongs to the bacterial ribosomal protein bL33 family.

The polypeptide is Large ribosomal subunit protein bL33 (Anaeromyxobacter dehalogenans (strain 2CP-C)).